A 119-amino-acid chain; its full sequence is Protein TusC (119 aa).

The protein belongs to the DsrF/TusC family. Heterohexamer, formed by a dimer of trimers. The hexameric TusBCD complex contains 2 copies each of TusB, TusC and TusD. The TusBCD complex interacts with TusE.

Its subcellular location is the cytoplasm. Part of a sulfur-relay system required for 2-thiolation of 5-methylaminomethyl-2-thiouridine (mnm(5)s(2)U) at tRNA wobble positions. The protein is Protein TusC of Escherichia coli O127:H6 (strain E2348/69 / EPEC).